The chain runs to 565 residues: Ubiquitin carboxyl-terminal hydrolase 21 (565 aa).

Basic and acidic residues predominate over residues 1-14 (MPQASEHRLGRTRE). Disordered regions lie at residues 1–103 (MPQA…LPLP), 109–128 (ARSK…ALGG), and 142–163 (LALR…LGGF). Residues 42 to 57 (APGPNPMLRPLPPRPG) show a composition bias toward pro residues. Residues 58 to 70 (PPEERLKKLELGR) are compositionally biased toward basic and acidic residues. Positions 71-82 (GRTSGPRPSGPL) are enriched in low complexity. The Nuclear export signal signature appears at 134-152 (ELGAALSRLALRPEPPPLR). One can recognise a USP domain in the interval 212–558 (VGLRNLGNTC…EGYVLFYQLM (347 aa)). Cysteine 221 serves as the catalytic Nucleophile. The Zn(2+) site is built by cysteine 384, cysteine 387, cysteine 437, and cysteine 440. The active-site Proton acceptor is the histidine 518.

It belongs to the peptidase C19 family. USP21 subfamily. Interacts with BEND3.

The protein localises to the cytoplasm. Its subcellular location is the nucleus. The enzyme catalyses Thiol-dependent hydrolysis of ester, thioester, amide, peptide and isopeptide bonds formed by the C-terminal Gly of ubiquitin (a 76-residue protein attached to proteins as an intracellular targeting signal).. In terms of biological role, deubiquitinating enzyme that hydrolyzes 'Lys-6'- and 'Lys-11'-linked polyubiquitin. Also hydrolyzes heterotypic (mixed and branched) and homotypic chains. Important regulator of energy metabolism. Glucose and fatty acids trigger its nuclear translocation by CBP-dependent acetylation. In the nucleus, deubiquitinates and stabilizes the nuclear receptor PPARD regulating the expression of various genes involved in glucose and lipid metabolism and oxidative phosphorylation. Also acts as a negative regulator of the ribosome quality control (RQC) by mediating deubiquitination of 40S ribosomal proteins RPS10/eS10 and RPS20/uS10, thereby antagonizing ZNF598-mediated 40S ubiquitination. This Bos taurus (Bovine) protein is Ubiquitin carboxyl-terminal hydrolase 21 (USP21).